The primary structure comprises 118 residues: Small ribosomal subunit protein uS13 (118 aa).

The interval 94-118 (GLPVRGQRTKTNARTRKGPCKPIKK) is disordered.

It belongs to the universal ribosomal protein uS13 family. As to quaternary structure, part of the 30S ribosomal subunit. Forms a loose heterodimer with protein S19. Forms two bridges to the 50S subunit in the 70S ribosome.

Located at the top of the head of the 30S subunit, it contacts several helices of the 16S rRNA. In the 70S ribosome it contacts the 23S rRNA (bridge B1a) and protein L5 of the 50S subunit (bridge B1b), connecting the 2 subunits; these bridges are implicated in subunit movement. Contacts the tRNAs in the A and P-sites. The polypeptide is Small ribosomal subunit protein uS13 (Salmonella typhi).